The following is a 471-amino-acid chain: FAD-dependent monooxygenase andE (471 aa).

FAD is bound by residues glutamate 35, glycine 49, and arginine 108. Residue tyrosine 216 is part of the active site. The FAD site is built by aspartate 308 and alanine 321. 2 helical membrane-spanning segments follow: residues 403–423 (LANI…LPFP) and 443–463 (TPFA…LLGL).

The protein belongs to the paxM FAD-dependent monooxygenase family. Requires FAD as cofactor.

It is found in the membrane. It participates in secondary metabolite biosynthesis; terpenoid biosynthesis. In terms of biological role, FAD-dependent monooxygenase; part of the gene cluster that mediates the biosynthesis of anditomin, a fungal meroterpenoid. The first step of the pathway is the synthesis of 3,5-dimethylorsellinic acid (DMOA) by the polyketide synthase andM. DMOA is then converted to the phthalide compound 5,7-dihydroxy-4,6-dimethylphthalide (DHDMP) by the cytochrome P450 monooxygenase andK, which is further prenylated by the prenyltransferase andD to yield farnesyl-DHDMP. Further epoxidation by the FAD-dependent monooxygenase andE leads to epoxyfarnesyl-DHDMP. The next step involves the terpene cyclase andB that converts epoxyfarnesyl-DHDMP into preandiloid A through opening of the epoxide ring followed by the cyclization of the farnesyl moiety. Preandiloid A is in turn oxidized at the C-3 hydroxyl group to yield preandiloid B by the dehydrogenase andC. The dioxygenase andA is solely responsible for the dehydrogenation of preandiloid B leading to the enone preandiloid C, as well as for the intriguing structural rearrangement to generate the bicyclo[2.2.2]octane core, transforming preandiloid C into andiconin. FAD-binding monooxygenase andJ then produces andilesin D which is reduced by dehydrogenase andI to yield andilesin A. Action of acetyltransferase andG followed by a spontaneous acetate elimination leads then to andilesin B, which is in turn substrate of the short chain dehydrogenase andH to yield andilesin C. Finally, the dioxygenase andF catalyzes the transformation of andilesin C to anditomin. In Emericella variicolor (Aspergillus stellatus), this protein is FAD-dependent monooxygenase andE.